We begin with the raw amino-acid sequence, 369 residues long: MGVKTFQFPFAEQLEKVAEQFPTFQILNEEGEVVNEEAMPELSDEQLKELMRRMVYTRILDQRSISLNRQGRLGFYAPTAGQEASQIASHFALEKEDFILPGYRDVPQIIWHGLPLYQAFLFSRGHFHGNQIPEGVNVLPPQIIIGAQYIQAAGVALGLKMRGKKAVAITYTGDGGTSQGDFYEGINFAGAFKAPAIFVVQNNRFAISTPVEKQTVAKTLAQKAVAAGIPGIQVDGMDPLAVYAAVKAARERAINGEGPTLIETLCFRYGPHTMSGDDPTRYRSKELENEWAKKDPLVRFRKFLEAKGLWSEEEENNVIEQAKEEIKEAIKKADETPKQKVTDLISIMFEELPFNLKEQYEIYKEKESK.

In terms of assembly, heterodimer of an alpha and a beta chain. Thiamine diphosphate is required as a cofactor.

The enzyme catalyses N(6)-[(R)-lipoyl]-L-lysyl-[protein] + pyruvate + H(+) = N(6)-[(R)-S(8)-acetyldihydrolipoyl]-L-lysyl-[protein] + CO2. Functionally, the pyruvate dehydrogenase complex catalyzes the overall conversion of pyruvate to acetyl-CoA and CO(2). It contains multiple copies of three enzymatic components: pyruvate dehydrogenase (E1), dihydrolipoamide acetyltransferase (E2) and lipoamide dehydrogenase (E3). This Geobacillus stearothermophilus (Bacillus stearothermophilus) protein is Pyruvate dehydrogenase E1 component subunit alpha (pdhA).